The following is an 841-amino-acid chain: Probable outer membrane usher protein EcpC (841 aa).

An N-terminal signal peptide occupies residues 1 to 29 (MPLRRFSPGLKAQFAFGMVFLFVQPDASA).

The protein belongs to the EcpC/MatD family.

Its function is as follows. Part of the ecpRABCDE operon, which encodes the E.coli common pilus (ECP). ECP is found in both commensal and pathogenic strains and plays a dual role in early-stage biofilm development and host cell recognition. The protein is Probable outer membrane usher protein EcpC (ecpC) of Escherichia coli O157:H7.